A 54-amino-acid chain; its full sequence is UPF0181 protein APJL_0874 (54 aa).

It belongs to the UPF0181 family.

This chain is UPF0181 protein APJL_0874, found in Actinobacillus pleuropneumoniae serotype 3 (strain JL03).